The primary structure comprises 365 residues: Cobalt-precorrin-5B C(1)-methyltransferase (365 aa).

The protein belongs to the CbiD family.

It carries out the reaction Co-precorrin-5B + S-adenosyl-L-methionine = Co-precorrin-6A + S-adenosyl-L-homocysteine. It functions in the pathway cofactor biosynthesis; adenosylcobalamin biosynthesis; cob(II)yrinate a,c-diamide from sirohydrochlorin (anaerobic route): step 6/10. In terms of biological role, catalyzes the methylation of C-1 in cobalt-precorrin-5B to form cobalt-precorrin-6A. This Clostridium perfringens (strain SM101 / Type A) protein is Cobalt-precorrin-5B C(1)-methyltransferase.